A 598-amino-acid chain; its full sequence is IQ calmodulin-binding motif-containing protein 1 (598 aa).

The tract at residues 1–157 (MKPTGTDPRI…SLFWLLGGHV (157 aa)) is interaction with BBS1, BBS8 and BBS9. Residues 287-598 (QEVEEQKLHQ…NLFIGGTKPP (312 aa)) form an interaction with CEP290, BBS1, BBS2, BBS4, BBS5, BBS7, BBS8 and BBS9 region. IQ domains are found at residues 294 to 317 (LHQA…LKKL), 318 to 338 (PSAV…MLLE), 387 to 416 (EEKS…SLIE), and 417 to 437 (YKAA…CRKK). Residues 336-373 (LLEINRQKEEEDLKLQLQLQRQRAMRLSRELQLSMLEI) adopt a coiled-coil conformation. Residues 530–598 (AEGKEPELFL…NLFIGGTKPP (69 aa)) are interaction with BBS1, BBS2, BBS4, BBS7, BBS8 and BBS9. At Ser572 the chain carries Phosphoserine.

Interacts with CEP290/NPHP6; IQCB1/NPHP5 and CEP290 are proposed to form a functional NPHP5-6 module/NPHP6; localized to the centrosome. Interacts with calmodulin, ATXN10. Interacts with NPHP1, INVS, NPHP4 and RPGRIP1L; these interactions likely require additional interactors. Associates with the BBSome complex; interacts with BBS1, BBS2, BBS4, BBS5, BBS7, BBS8 and BBS9. As to expression, ubiquitously expressed in fetal and adult tissues. Localized to the outer segments and connecting cilia of photoreceptor cells. Up-regulated in a number of primary colorectal and gastric tumors.

It localises to the cytoplasm. The protein resides in the cytoskeleton. The protein localises to the microtubule organizing center. Its subcellular location is the centrosome. It is found in the centriole. Its function is as follows. Involved in ciliogenesis. The function in an early step in cilia formation depends on its association with CEP290/NPHP6. Involved in regulation of the BBSome complex integrity, specifically for presence of BBS2 and BBS5 in the complex, and in ciliary targeting of selected BBSome cargos. May play a role in controlling entry of the BBSome complex to cilia possibly implicating CEP290/NPHP6. The chain is IQ calmodulin-binding motif-containing protein 1 (IQCB1) from Homo sapiens (Human).